Reading from the N-terminus, the 90-residue chain is YcgL domain-containing protein Spro_2755 (90 aa).

The 85-residue stretch at 1-85 (MLCVIYRSSK…PLENLLKQHL (85 aa)) folds into the YcgL domain.

The polypeptide is YcgL domain-containing protein Spro_2755 (Serratia proteamaculans (strain 568)).